Reading from the N-terminus, the 172-residue chain is Translationally-controlled tumor protein (172 aa).

Positions 1–172 (MIIYRDLISH…FKDGLEMEKC (172 aa)) constitute a TCTP domain. Ser46 bears the Phosphoserine; by PLK1 mark. Ser53 carries the phosphoserine modification. At Ser64 the chain carries Phosphoserine; by PLK1. The required for reduction of TSC22D1 protein stability stretch occupies residues 70–172 (VDIVMNHHLQ…FKDGLEMEKC (103 aa)).

This sequence belongs to the TCTP family. As to quaternary structure, homodimer. Interacts with STEAP3. Interacts with TSC22D1; interaction results in the destabilization of TSC22D1 protein.

The protein localises to the cytoplasm. Its function is as follows. Involved in calcium binding and microtubule stabilization. Acts as a negative regulator of TSC22D1-mediated apoptosis, via interaction with and destabilization of TSC22D1 protein. The sequence is that of Translationally-controlled tumor protein (TPT1) from Oryctolagus cuniculus (Rabbit).